The chain runs to 393 residues: Digeranylgeranylglycerophospholipid reductase (393 aa).

Alanine 13, aspartate 32, cysteine 43, alanine 44, glycine 46, arginine 95, valine 119, aspartate 274, and glycine 286 together coordinate FAD. Lysine 327 and glycine 363 together coordinate a 2,3-bis-O-(geranylgeranyl)-sn-glycerol 1-phospholipid.

Belongs to the geranylgeranyl reductase family. DGGGPL reductase subfamily. The cofactor is FAD.

It carries out the reaction a 2,3-bis-O-phytanyl-sn-glycerol 1-phospholipid + 8 A = a 2,3-bis-O-(geranylgeranyl)-sn-glycerol 1-phospholipid + 8 AH2. The catalysed reaction is 2,3-bis-O-(phytanyl)-sn-glycerol 1-phosphate + 8 A = 2,3-bis-O-(geranylgeranyl)-sn-glycerol 1-phosphate + 8 AH2. The enzyme catalyses CDP-2,3-bis-O-(geranylgeranyl)-sn-glycerol + 8 AH2 = CDP-2,3-bis-O-(phytanyl)-sn-glycerol + 8 A. It catalyses the reaction archaetidylserine + 8 AH2 = 2,3-bis-O-phytanyl-sn-glycero-3-phospho-L-serine + 8 A. The protein operates within membrane lipid metabolism; glycerophospholipid metabolism. Its function is as follows. Is involved in the reduction of 2,3-digeranylgeranylglycerophospholipids (unsaturated archaeols) into 2,3-diphytanylglycerophospholipids (saturated archaeols) in the biosynthesis of archaeal membrane lipids. Catalyzes the formation of archaetidic acid (2,3-di-O-phytanyl-sn-glyceryl phosphate) from 2,3-di-O-geranylgeranylglyceryl phosphate (DGGGP) via the hydrogenation of each double bond of the isoprenoid chains. Is also probably able to reduce double bonds of geranyl groups in CDP-2,3-bis-O-(geranylgeranyl)-sn-glycerol and archaetidylserine, thus acting at various stages in the biosynthesis of archaeal membrane lipids. In Pyrococcus furiosus (strain ATCC 43587 / DSM 3638 / JCM 8422 / Vc1), this protein is Digeranylgeranylglycerophospholipid reductase.